Reading from the N-terminus, the 209-residue chain is MPVAVMAESAFSFKKLLDQCENQELEAPGGIATPPVYGQLLALYLLHNDMNNARYLWKRIPPAIKSANSELGGIWSVGQRIWQRDFPGIYTTINAHQWSETVQPIMEALRDATRRRAFALVSQAYTSIIADDFAAFVGLPVEEAVKGILEQGWQADSTTRMVLPRKPVAGALDVSFNKFIPLSEPAPVPPIPNEQQLARLTDYVAFLEN.

The 172-residue stretch at 8-179 (ESAFSFKKLL…GALDVSFNKF (172 aa)) folds into the PCI domain. S175 carries the phosphoserine modification.

Belongs to the CSN8 family. In terms of assembly, component of the CSN complex, composed of COPS1/GPS1, COPS2, COPS3, COPS4, COPS5, COPS6, COPS7 (COPS7A or COPS7B), COPS8 and COPS9 isoform 1. In the complex, it probably interacts directly with COPS3, COPS4 and COPS7 (COPS7A or COPS7B).

It is found in the cytoplasm. It localises to the nucleus. Its function is as follows. Component of the COP9 signalosome complex (CSN), a complex involved in various cellular and developmental processes. The CSN complex is an essential regulator of the ubiquitin (Ubl) conjugation pathway by mediating the deneddylation of the cullin subunits of SCF-type E3 ligase complexes, leading to decrease the Ubl ligase activity of SCF-type complexes such as SCF, CSA or DDB2. The complex is also involved in phosphorylation of p53/TP53, c-jun/JUN, IkappaBalpha/NFKBIA, ITPK1 and IRF8/ICSBP, possibly via its association with CK2 and PKD kinases. CSN-dependent phosphorylation of TP53 and JUN promotes and protects degradation by the Ubl system, respectively. In Homo sapiens (Human), this protein is COP9 signalosome complex subunit 8 (COPS8).